The chain runs to 766 residues: Subtilisin-like protease SBT4.15 (766 aa).

The signal sequence occupies residues Met1–Ala23. Positions Ala24–His113 are cleaved as a propeptide — activation peptide. The Inhibitor I9 domain occupies Tyr35–His113. The 485-residue stretch at Ser117–Ile601 folds into the Peptidase S8 domain. Asp144 serves as the catalytic Charge relay system. Asn175 carries an N-linked (GlcNAc...) asparagine glycan. His210 functions as the Charge relay system in the catalytic mechanism. 3 N-linked (GlcNAc...) asparagine glycosylation sites follow: Asn233, Asn376, and Asn465. A PA domain is found at Met365–Ile460. Ser543 functions as the Charge relay system in the catalytic mechanism. N-linked (GlcNAc...) asparagine glycans are attached at residues Asn624, Asn638, and Asn668.

The protein belongs to the peptidase S8 family. Post-translationally, the C-terminal propeptide is autocleaved.

The protein resides in the secreted. The polypeptide is Subtilisin-like protease SBT4.15 (Arabidopsis thaliana (Mouse-ear cress)).